The chain runs to 362 residues: Chorismate synthase (362 aa).

NADP(+) is bound at residue R47. FMN is bound by residues 124–126, G286, 301–305, and R327; these read RSS and KPTAT.

Belongs to the chorismate synthase family. In terms of assembly, homotetramer. It depends on FMNH2 as a cofactor.

The enzyme catalyses 5-O-(1-carboxyvinyl)-3-phosphoshikimate = chorismate + phosphate. The protein operates within metabolic intermediate biosynthesis; chorismate biosynthesis; chorismate from D-erythrose 4-phosphate and phosphoenolpyruvate: step 7/7. Its function is as follows. Catalyzes the anti-1,4-elimination of the C-3 phosphate and the C-6 proR hydrogen from 5-enolpyruvylshikimate-3-phosphate (EPSP) to yield chorismate, which is the branch point compound that serves as the starting substrate for the three terminal pathways of aromatic amino acid biosynthesis. This reaction introduces a second double bond into the aromatic ring system. The sequence is that of Chorismate synthase from Synechococcus elongatus (strain ATCC 33912 / PCC 7942 / FACHB-805) (Anacystis nidulans R2).